The following is a 160-amino-acid chain: Putative pre-16S rRNA nuclease (160 aa).

It belongs to the YqgF nuclease family.

The protein localises to the cytoplasm. Functionally, could be a nuclease involved in processing of the 5'-end of pre-16S rRNA. The sequence is that of Putative pre-16S rRNA nuclease from Jannaschia sp. (strain CCS1).